The primary structure comprises 508 residues: Photosystem II CP47 reaction center protein (508 aa).

6 helical membrane passes run 21–36 (SVHI…WAGS), 101–115 (IMFS…IWHW), 140–156 (GIHL…FGAF), 203–218 (IAAG…FHLS), 237–252 (VLSS…AFVV), and 457–472 (SFAL…HGAR).

Belongs to the PsbB/PsbC family. PsbB subfamily. In terms of assembly, PSII is composed of 1 copy each of membrane proteins PsbA, PsbB, PsbC, PsbD, PsbE, PsbF, PsbH, PsbI, PsbJ, PsbK, PsbL, PsbM, PsbT, PsbX, PsbY, PsbZ, Psb30/Ycf12, at least 3 peripheral proteins of the oxygen-evolving complex and a large number of cofactors. It forms dimeric complexes. Binds multiple chlorophylls. PSII binds additional chlorophylls, carotenoids and specific lipids. serves as cofactor.

It is found in the plastid. The protein localises to the chloroplast thylakoid membrane. Its function is as follows. One of the components of the core complex of photosystem II (PSII). It binds chlorophyll and helps catalyze the primary light-induced photochemical processes of PSII. PSII is a light-driven water:plastoquinone oxidoreductase, using light energy to abstract electrons from H(2)O, generating O(2) and a proton gradient subsequently used for ATP formation. In Ceratophyllum demersum (Rigid hornwort), this protein is Photosystem II CP47 reaction center protein.